The chain runs to 383 residues: Pleckstrin homology domain-containing family A member 1 (383 aa).

2 PH domains span residues 7–112 and 191–289; these read QNRI…KAIK and AVIK…GAIV. Valine 284 is modified (phosphoserine). The disordered stretch occupies residues 362–383; sequence LPRSSQGTSRSRLSLQESQLPK. Positions 370 to 383 are enriched in low complexity; that stretch reads SRSRLSLQESQLPK.

Interacts with MPDZ and PTPN13.

The protein localises to the cytoplasm. It localises to the cell membrane. Its subcellular location is the nucleus. Functionally, binds specifically to phosphatidylinositol 3,4-diphosphate (PtdIns3,4P2), but not to other phosphoinositides. May recruit other proteins to the plasma membrane. This is Pleckstrin homology domain-containing family A member 1 (Plekha1) from Mus musculus (Mouse).